The following is an 82-amino-acid chain: Putative membrane protein insertion efficiency factor (82 aa).

A disordered region spans residues 61–82 (HEGGYDPVPKRKNKNSEGKREE).

The protein belongs to the UPF0161 family.

The protein resides in the cell inner membrane. Its function is as follows. Could be involved in insertion of integral membrane proteins into the membrane. This Fusobacterium nucleatum subsp. nucleatum (strain ATCC 25586 / DSM 15643 / BCRC 10681 / CIP 101130 / JCM 8532 / KCTC 2640 / LMG 13131 / VPI 4355) protein is Putative membrane protein insertion efficiency factor.